We begin with the raw amino-acid sequence, 200 residues long: Large ribosomal subunit protein bL25 (200 aa).

The protein belongs to the bacterial ribosomal protein bL25 family. CTC subfamily. Part of the 50S ribosomal subunit; part of the 5S rRNA/L5/L18/L25 subcomplex. Contacts the 5S rRNA. Binds to the 5S rRNA independently of L5 and L18.

Its function is as follows. This is one of the proteins that binds to the 5S RNA in the ribosome where it forms part of the central protuberance. This chain is Large ribosomal subunit protein bL25, found in Leifsonia xyli subsp. xyli (strain CTCB07).